The primary structure comprises 435 residues: Methylenetetrahydrofolate--tRNA-(uracil-5-)-methyltransferase TrmFO (435 aa).

FAD is bound at residue 9–14 (GAGLAG).

Belongs to the MnmG family. TrmFO subfamily. It depends on FAD as a cofactor.

The protein resides in the cytoplasm. The enzyme catalyses uridine(54) in tRNA + (6R)-5,10-methylene-5,6,7,8-tetrahydrofolate + NADH + H(+) = 5-methyluridine(54) in tRNA + (6S)-5,6,7,8-tetrahydrofolate + NAD(+). It catalyses the reaction uridine(54) in tRNA + (6R)-5,10-methylene-5,6,7,8-tetrahydrofolate + NADPH + H(+) = 5-methyluridine(54) in tRNA + (6S)-5,6,7,8-tetrahydrofolate + NADP(+). Catalyzes the folate-dependent formation of 5-methyl-uridine at position 54 (M-5-U54) in all tRNAs. The chain is Methylenetetrahydrofolate--tRNA-(uracil-5-)-methyltransferase TrmFO from Staphylococcus epidermidis (strain ATCC 35984 / DSM 28319 / BCRC 17069 / CCUG 31568 / BM 3577 / RP62A).